Reading from the N-terminus, the 421-residue chain is Enolase (421 aa).

Glutamine 161 serves as a coordination point for (2R)-2-phosphoglycerate. Residue glutamate 203 is the Proton donor of the active site. Residues aspartate 240, glutamate 283, and aspartate 310 each coordinate Mg(2+). The (2R)-2-phosphoglycerate site is built by lysine 335, arginine 364, serine 365, and lysine 386. Catalysis depends on lysine 335, which acts as the Proton acceptor.

Belongs to the enolase family. The cofactor is Mg(2+).

It is found in the cytoplasm. It localises to the secreted. Its subcellular location is the cell surface. The enzyme catalyses (2R)-2-phosphoglycerate = phosphoenolpyruvate + H2O. The protein operates within carbohydrate degradation; glycolysis; pyruvate from D-glyceraldehyde 3-phosphate: step 4/5. Functionally, catalyzes the reversible conversion of 2-phosphoglycerate (2-PG) into phosphoenolpyruvate (PEP). It is essential for the degradation of carbohydrates via glycolysis. This Sulfurimonas denitrificans (strain ATCC 33889 / DSM 1251) (Thiomicrospira denitrificans (strain ATCC 33889 / DSM 1251)) protein is Enolase.